The following is a 159-amino-acid chain: Ribonuclease P protein component 2 (159 aa).

This sequence belongs to the eukaryotic/archaeal RNase P protein component 2 family. As to quaternary structure, consists of a catalytic RNA component and at least 4-5 protein subunits.

The protein localises to the cytoplasm. It carries out the reaction Endonucleolytic cleavage of RNA, removing 5'-extranucleotides from tRNA precursor.. Its function is as follows. Part of ribonuclease P, a protein complex that generates mature tRNA molecules by cleaving their 5'-ends. The chain is Ribonuclease P protein component 2 from Halorubrum lacusprofundi (strain ATCC 49239 / DSM 5036 / JCM 8891 / ACAM 34).